The primary structure comprises 1456 residues: DNA polymerase gamma, mitochondrial (1456 aa).

The N-terminal 41 residues, 1–41 (MLTPVRCRTVPNATVATAARVLRRANLFSRYPRQLGHLRWD), are a transit peptide targeting the mitochondrion. 2 disordered regions span residues 1200–1266 (APEM…SLDD) and 1308–1443 (AVTT…SWKP). A compositionally biased stretch (low complexity) spans 1204–1239 (AAVPSTSSESKSKASATTSTTTTENATASPSSSSNV). Residues 1315–1325 (PEPPTNPPPVA) show a composition bias toward pro residues. Composition is skewed to low complexity over residues 1346–1371 (PKNPTPTLTPTTKKSNPTSTPTTPKP) and 1411–1428 (TASVGGRATTTTATATAT).

The protein belongs to the DNA polymerase type-A family. Requires Mg(2+) as cofactor.

The protein resides in the mitochondrion. It carries out the reaction DNA(n) + a 2'-deoxyribonucleoside 5'-triphosphate = DNA(n+1) + diphosphate. Involved in the replication of mitochondrial DNA. The sequence is that of DNA polymerase gamma, mitochondrial (mip-1) from Neurospora crassa (strain ATCC 24698 / 74-OR23-1A / CBS 708.71 / DSM 1257 / FGSC 987).